The following is a 219-amino-acid chain: Putative protease Do-like 6, chloroplastic (219 aa).

Residues 1–45 (MLFRSVHHIVARFSNSTSTPIHRFFYSPSLLRRRSSFNASLISRC) constitute a chloroplast transit peptide. The serine protease stretch occupies residues 61 to 216 (KIFSFSREPN…YSGQINKKIY (156 aa)). Active-site charge relay system residues include histidine 99, aspartate 130, and serine 208.

It belongs to the peptidase S1B family.

It localises to the plastid. The protein resides in the chloroplast. Its function is as follows. Putative serine protease. The protein is Putative protease Do-like 6, chloroplastic (DEGP6) of Arabidopsis thaliana (Mouse-ear cress).